Consider the following 288-residue polypeptide: Bifunctional protein FolD (288 aa).

NADP(+) is bound by residues 166–168 (GAS) and Ile232.

It belongs to the tetrahydrofolate dehydrogenase/cyclohydrolase family. As to quaternary structure, homodimer.

It catalyses the reaction (6R)-5,10-methylene-5,6,7,8-tetrahydrofolate + NADP(+) = (6R)-5,10-methenyltetrahydrofolate + NADPH. The enzyme catalyses (6R)-5,10-methenyltetrahydrofolate + H2O = (6R)-10-formyltetrahydrofolate + H(+). The protein operates within one-carbon metabolism; tetrahydrofolate interconversion. Functionally, catalyzes the oxidation of 5,10-methylenetetrahydrofolate to 5,10-methenyltetrahydrofolate and then the hydrolysis of 5,10-methenyltetrahydrofolate to 10-formyltetrahydrofolate. This Salmonella enteritidis PT4 (strain P125109) protein is Bifunctional protein FolD.